Reading from the N-terminus, the 442-residue chain is 26S proteasome non-ATPase regulatory subunit 12 homolog A (442 aa).

Positions 6 to 137 (KLEATIDRLL…EAADLMQEVA (132 aa)) form a coiled coil. The 172-residue stretch at 232-403 (EICRSYKAIY…GIVCFQIAKD (172 aa)) folds into the PCI domain.

It belongs to the proteasome subunit p55 family. In terms of assembly, component of the 19S regulatory particle (RP/PA700) lid subcomplex of the 26S proteasome. The 26S proteasome is composed of a core protease (CP), known as the 20S proteasome, capped at one or both ends by the 19S regulatory particle (RP/PA700). The RP/PA700 complex is composed of at least 17 different subunits in two subcomplexes, the base and the lid, which form the portions proximal and distal to the 20S proteolytic core, respectively. As to expression, ubiquitous with highest expression in flowers.

It is found in the cytoplasm. The protein localises to the nucleus. Acts as a regulatory subunit of the 26 proteasome which is involved in the ATP-dependent degradation of ubiquitinated proteins. Required for gametogenesis and sporophyte development. Acts redundantly with RPN5B. This chain is 26S proteasome non-ATPase regulatory subunit 12 homolog A (RPN5A), found in Arabidopsis thaliana (Mouse-ear cress).